Here is a 189-residue protein sequence, read N- to C-terminus: Glutathione-dependent formaldehyde-activating enzyme (189 aa).

In terms of domain architecture, CENP-V/GFA spans 20–167; the sequence is FAGGTLVCKC…LKELGLEPYD (148 aa). Positions 27, 29, 48, 50, 53, 95, and 98 each coordinate Zn(2+).

The protein belongs to the Gfa family. Zn(2+) is required as a cofactor.

The catalysed reaction is S-(hydroxymethyl)glutathione = glutathione + formaldehyde. It functions in the pathway one-carbon metabolism; formaldehyde degradation; formate from formaldehyde (glutathione route): step 1/3. Catalyzes the condensation of formaldehyde and glutathione to S-hydroxymethylglutathione. This is Glutathione-dependent formaldehyde-activating enzyme from Rhodopseudomonas palustris (strain BisB18).